The following is a 636-amino-acid chain: 1-deoxy-D-xylulose-5-phosphate synthase (636 aa).

Residues H73 and 114–116 (SHA) each bind thiamine diphosphate. D146 contacts Mg(2+). Residues 147–148 (GA), N176, Y287, and E368 contribute to the thiamine diphosphate site. Residue N176 coordinates Mg(2+).

The protein belongs to the transketolase family. DXPS subfamily. As to quaternary structure, homodimer. Mg(2+) serves as cofactor. The cofactor is thiamine diphosphate.

It carries out the reaction D-glyceraldehyde 3-phosphate + pyruvate + H(+) = 1-deoxy-D-xylulose 5-phosphate + CO2. Its pathway is metabolic intermediate biosynthesis; 1-deoxy-D-xylulose 5-phosphate biosynthesis; 1-deoxy-D-xylulose 5-phosphate from D-glyceraldehyde 3-phosphate and pyruvate: step 1/1. Catalyzes the acyloin condensation reaction between C atoms 2 and 3 of pyruvate and glyceraldehyde 3-phosphate to yield 1-deoxy-D-xylulose-5-phosphate (DXP). The chain is 1-deoxy-D-xylulose-5-phosphate synthase from Corynebacterium glutamicum (strain ATCC 13032 / DSM 20300 / JCM 1318 / BCRC 11384 / CCUG 27702 / LMG 3730 / NBRC 12168 / NCIMB 10025 / NRRL B-2784 / 534).